A 279-amino-acid chain; its full sequence is Probable autolysin LDP (279 aa).

The first 24 residues, M1–A24, serve as a signal peptide directing secretion. Positions T51–L94 constitute a LysM domain. In terms of domain architecture, Peptidase C51 spans V158–H279.

It catalyses the reaction Hydrolyzes the link between N-acetylmuramoyl residues and L-amino acid residues in certain cell-wall glycopeptides.. In terms of biological role, has weak lytic activity toward S.aureus cells. The protein is Probable autolysin LDP of Staphylococcus aureus (strain NCTC 8325 / PS 47).